A 126-amino-acid chain; its full sequence is Ribonuclease P protein component (126 aa).

This sequence belongs to the RnpA family. As to quaternary structure, consists of a catalytic RNA component (M1 or rnpB) and a protein subunit.

The catalysed reaction is Endonucleolytic cleavage of RNA, removing 5'-extranucleotides from tRNA precursor.. Functionally, RNaseP catalyzes the removal of the 5'-leader sequence from pre-tRNA to produce the mature 5'-terminus. It can also cleave other RNA substrates such as 4.5S RNA. The protein component plays an auxiliary but essential role in vivo by binding to the 5'-leader sequence and broadening the substrate specificity of the ribozyme. This Rhodococcus erythropolis (strain PR4 / NBRC 100887) protein is Ribonuclease P protein component.